Here is a 342-residue protein sequence, read N- to C-terminus: Flavanone 3-dioxygenase 2 (342 aa).

The Fe2OG dioxygenase domain occupies 193–293 (QEQHMAVNYY…RMSVASFLCP (101 aa)). Residues His217, Asp219, and His274 each coordinate Fe cation. 2-oxoglutarate is bound at residue Arg284.

Belongs to the iron/ascorbate-dependent oxidoreductase family. Requires Fe(2+) as cofactor. It depends on L-ascorbate as a cofactor. In terms of tissue distribution, expressed in roots, leaves and stems. Expressed at low levels in seeds.

The catalysed reaction is a (2S)-flavan-4-one + 2-oxoglutarate + O2 = a (2R,3R)-dihydroflavonol + succinate + CO2. It participates in secondary metabolite biosynthesis; flavonoid biosynthesis. Catalyzes the 3-beta-hydroxylation of 2S-flavanones to 2R,3R-dihydroflavonols which are intermediates in the biosynthesis of flavonols, anthocyanidins, catechins and proanthocyanidins in plants. Converts (2S)-eriodictyol to (+)-taxifolin and (2S)-naringenin to (+)-(2R/3R)-dihydrokaempferol in vitro. The sequence is that of Flavanone 3-dioxygenase 2 from Oryza sativa subsp. japonica (Rice).